We begin with the raw amino-acid sequence, 470 residues long: Growth/differentiation factor 6 (470 aa).

The N-terminal stretch at 1–22 is a signal peptide; that stretch reads MDTSRVLLSAVFLISFLWDLPG. The propeptide occupies 23–350; that stretch reads FQQASISSSS…SPSPGRRRRR (328 aa). The interval 28–98 is disordered; the sequence is ISSSSSSAEL…REPPGRGPRV (71 aa). Residues 45–80 are compositionally biased toward basic and acidic residues; it reads SRKEGRMPRAPRENATAREPLDRQEPPPRPQEEPQR. N120 carries an N-linked (GlcNAc...) asparagine glycan. Disordered regions lie at residues 247-272 and 308-366; these read PGAAEDEARAPGPQQPPPPDLRSLGF and TEVV…KKSR. The segment covering 321–333 has biased composition (pro residues); that stretch reads GPPPPPPPPPPSG. The segment covering 345-366 has biased composition (basic residues); the sequence is GRRRRRTAFASRHGKRHGKKSR. Cystine bridges form between C369/C435, C398/C467, and C402/C469.

This sequence belongs to the TGF-beta family. In terms of assembly, homodimer; disulfide-linked.

Its subcellular location is the secreted. Its function is as follows. Growth factor that controls proliferation and cellular differentiation in the retina and bone formation. Plays a key role in regulating apoptosis during retinal development. Establishes dorsal-ventral positional information in the retina and controls the formation of the retinotectal map. Required for normal formation of bones and joints in the limbs, skull, digits and axial skeleton. Plays a key role in establishing boundaries between skeletal elements during development. Regulation of GDF6 expression seems to be a mechanism for evolving species-specific changes in skeletal structures. Seems to positively regulate differentiation of chondrogenic tissue through the growth factor receptors subunits BMPR1A, BMPR1B, BMPR2 and ACVR2A, leading to the activation of SMAD1-SMAD5-SMAD8 complex. The regulation of chondrogenic differentiation is inhibited by NOG. Also involved in the induction of adipogenesis from mesenchymal stem cells. This mechanism acts through the growth factor receptors subunits BMPR1A, BMPR2 and ACVR2A and the activation of SMAD1-SMAD5-SMAD8 complex and MAPK14/p38. This Bos taurus (Bovine) protein is Growth/differentiation factor 6 (GDF6).